A 200-amino-acid polypeptide reads, in one-letter code: Sec-independent protein translocase protein TatB (200 aa).

Residues 2–22 (LPDIGGTELLIIAAVALIVVG) traverse the membrane as a helical segment. Residues 160–200 (KAPRKRASQKQEITVEAPKAVRAPRKRASKAGDSTASDIVS) form a disordered region. Over residues 191–200 (GDSTASDIVS) the composition is skewed to polar residues.

It belongs to the TatB family. In terms of assembly, the Tat system comprises two distinct complexes: a TatABC complex, containing multiple copies of TatA, TatB and TatC subunits, and a separate TatA complex, containing only TatA subunits. Substrates initially bind to the TatABC complex, which probably triggers association of the separate TatA complex to form the active translocon.

It is found in the cell inner membrane. Part of the twin-arginine translocation (Tat) system that transports large folded proteins containing a characteristic twin-arginine motif in their signal peptide across membranes. Together with TatC, TatB is part of a receptor directly interacting with Tat signal peptides. TatB may form an oligomeric binding site that transiently accommodates folded Tat precursor proteins before their translocation. This Caulobacter vibrioides (strain ATCC 19089 / CIP 103742 / CB 15) (Caulobacter crescentus) protein is Sec-independent protein translocase protein TatB.